The primary structure comprises 112 residues: T cell receptor alpha variable 30 (112 aa).

Residues 1-21 form the signal peptide; that stretch reads METLLKVLSGTLLWQLTWVRS. One can recognise an Ig-like domain in the interval 24–112; sequence PVQSPQAVIL…YSGTYFCGTE (89 aa). Residue asparagine 42 is glycosylated (N-linked (GlcNAc...) asparagine). Cysteine 43 and cysteine 109 are joined by a disulfide.

Alpha-beta TR is a heterodimer composed of an alpha and beta chain; disulfide-linked. The alpha-beta TR is associated with the transmembrane signaling CD3 coreceptor proteins to form the TR-CD3 (TcR or TCR). The assembly of alpha-beta TR heterodimers with CD3 occurs in the endoplasmic reticulum where a single alpha-beta TR heterodimer associates with one CD3D-CD3E heterodimer, one CD3G-CD3E heterodimer and one CD247 homodimer forming a stable octameric structure. CD3D-CD3E and CD3G-CD3E heterodimers preferentially associate with TR alpha and TR beta chains, respectively. The association of the CD247 homodimer is the last step of TcR assembly in the endoplasmic reticulum and is required for transport to the cell surface.

It localises to the cell membrane. Functionally, v region of the variable domain of T cell receptor (TR) alpha chain that participates in the antigen recognition. Alpha-beta T cell receptors are antigen specific receptors which are essential to the immune response and are present on the cell surface of T lymphocytes. Recognize peptide-major histocompatibility (MH) (pMH) complexes that are displayed by antigen presenting cells (APC), a prerequisite for efficient T cell adaptive immunity against pathogens. Binding of alpha-beta TR to pMH complex initiates TR-CD3 clustering on the cell surface and intracellular activation of LCK that phosphorylates the ITAM motifs of CD3G, CD3D, CD3E and CD247 enabling the recruitment of ZAP70. In turn ZAP70 phosphorylates LAT, which recruits numerous signaling molecules to form the LAT signalosome. The LAT signalosome propagates signal branching to three major signaling pathways, the calcium, the mitogen-activated protein kinase (MAPK) kinase and the nuclear factor NF-kappa-B (NF-kB) pathways, leading to the mobilization of transcription factors that are critical for gene expression and essential for T cell growth and differentiation. The T cell repertoire is generated in the thymus, by V-(D)-J rearrangement. This repertoire is then shaped by intrathymic selection events to generate a peripheral T cell pool of self-MH restricted, non-autoaggressive T cells. Post-thymic interaction of alpha-beta TR with the pMH complexes shapes TR structural and functional avidity. This Homo sapiens (Human) protein is T cell receptor alpha variable 30.